Reading from the N-terminus, the 132-residue chain is Small ribosomal subunit protein uS8 (132 aa).

This sequence belongs to the universal ribosomal protein uS8 family. In terms of assembly, part of the 30S ribosomal subunit. Contacts proteins S5 and S12.

Functionally, one of the primary rRNA binding proteins, it binds directly to 16S rRNA central domain where it helps coordinate assembly of the platform of the 30S subunit. The sequence is that of Small ribosomal subunit protein uS8 from Francisella tularensis subsp. holarctica (strain FTNF002-00 / FTA).